Consider the following 552-residue polypeptide: uncharacterized protein (552 aa).

This is an uncharacterized protein from Methanocaldococcus jannaschii (strain ATCC 43067 / DSM 2661 / JAL-1 / JCM 10045 / NBRC 100440) (Methanococcus jannaschii).